A 159-amino-acid chain; its full sequence is Transcription elongation factor A protein-like 1 (159 aa).

Positions 1–120 are disordered; that stretch reads MEKACKEPEE…PQFRGDIHGR (120 aa). The span at 17–34 shows a compositional bias: basic and acidic residues; the sequence is KADEERPSVEPSPEKSSP. The span at 37–54 shows a compositional bias: acidic residues; that stretch reads QSSEEVSSEEEFFPDELL. Basic and acidic residues-rich tracts occupy residues 64 to 80 and 95 to 119; these read SEER…DLFE and HKLE…DIHG.

It belongs to the TFS-II family. TFA subfamily.

It localises to the nucleus. Functionally, may be involved in transcriptional regulation. Modulates various viral and cellular promoters in a promoter context-dependent manner. Does not bind DNA directly. This Bos taurus (Bovine) protein is Transcription elongation factor A protein-like 1.